We begin with the raw amino-acid sequence, 309 residues long: Malate dehydrogenase (309 aa).

NAD(+) contacts are provided by residues 10-15 and Asp-34; that span reads GAGNVG. Residues Arg-83 and Arg-89 each contribute to the substrate site. NAD(+) is bound by residues Asn-96 and 119–121; that span reads VTN. 2 residues coordinate substrate: Asn-121 and Arg-152. His-176 functions as the Proton acceptor in the catalytic mechanism.

This sequence belongs to the LDH/MDH superfamily. MDH type 3 family.

It catalyses the reaction (S)-malate + NAD(+) = oxaloacetate + NADH + H(+). Catalyzes the reversible oxidation of malate to oxaloacetate. This chain is Malate dehydrogenase, found in Desulforudis audaxviator (strain MP104C).